The following is a 206-amino-acid chain: Nucleoside triphosphate pyrophosphatase (206 aa).

Residue aspartate 76 is the Proton acceptor of the active site.

Belongs to the Maf family. Requires a divalent metal cation as cofactor.

It localises to the cytoplasm. The catalysed reaction is a ribonucleoside 5'-triphosphate + H2O = a ribonucleoside 5'-phosphate + diphosphate + H(+). It catalyses the reaction a 2'-deoxyribonucleoside 5'-triphosphate + H2O = a 2'-deoxyribonucleoside 5'-phosphate + diphosphate + H(+). Nucleoside triphosphate pyrophosphatase. May have a dual role in cell division arrest and in preventing the incorporation of modified nucleotides into cellular nucleic acids. This Streptomyces avermitilis (strain ATCC 31267 / DSM 46492 / JCM 5070 / NBRC 14893 / NCIMB 12804 / NRRL 8165 / MA-4680) protein is Nucleoside triphosphate pyrophosphatase.